We begin with the raw amino-acid sequence, 124 residues long: Ribonuclease pancreatic (124 aa).

Positions 1 to 13 (KETSAQKFERQHM) are enriched in basic and acidic residues. The disordered stretch occupies residues 1–25 (KETSAQKFERQHMDSTGSSSSSPTY). 2 residues coordinate substrate: Lys7 and Arg10. The Proton acceptor role is filled by His12. 4 disulfide bridges follow: Cys26–Cys84, Cys40–Cys95, Cys58–Cys110, and Cys65–Cys72. Substrate is bound by residues 41 to 45 (KPVNT), Lys66, and Arg85. Residue His119 is the Proton donor of the active site.

Belongs to the pancreatic ribonuclease family. In terms of assembly, monomer. Interacts with and forms tight 1:1 complexes with RNH1. Dimerization of two such complexes may occur. Interaction with RNH1 inhibits this protein. In terms of tissue distribution, pancreas.

Its subcellular location is the secreted. It carries out the reaction an [RNA] containing cytidine + H2O = an [RNA]-3'-cytidine-3'-phosphate + a 5'-hydroxy-ribonucleotide-3'-[RNA].. The enzyme catalyses an [RNA] containing uridine + H2O = an [RNA]-3'-uridine-3'-phosphate + a 5'-hydroxy-ribonucleotide-3'-[RNA].. Functionally, endonuclease that catalyzes the cleavage of RNA on the 3' side of pyrimidine nucleotides. Acts on single-stranded and double-stranded RNA. The chain is Ribonuclease pancreatic (RNASE1) from Ondatra zibethicus (Muskrat).